The chain runs to 324 residues: Probable WRKY transcription factor 53 (324 aa).

Residues 93 to 126 (NPGSVPESPASINGSPRSEEFADGGGSSESHHRQ) form a disordered region. Positions 152–220 (GLEGPQDDVF…YRGTHTCSQA (69 aa)) form a DNA-binding region, WRKY.

It belongs to the WRKY group III family. Interacts with ESR/ESP and UPL5. Binds to WRKY30. Ubiquitinated by UPL5. Ubiquitination leads to its subsequent degradation, thus controlling the timing of leaf senescence.

Its subcellular location is the nucleus. Transcription factor. Interacts specifically with the W box (5'-(T)TGAC[CT]-3'), a frequently occurring elicitor-responsive cis-acting element. May regulate the early events of leaf senescence. Negatively regulates the expression of ESR/ESP. Together with WRKY46 and WRKY70, promotes resistance to P.syringae, probably by enhancing salicylic acid (SA)- dependent genes. Contributes to the suppression of jasmonic acid (MeJA)-induced expression of PDF1.2. The chain is Probable WRKY transcription factor 53 from Arabidopsis thaliana (Mouse-ear cress).